The following is a 179-amino-acid chain: Large ribosomal subunit protein uL5 (179 aa).

This sequence belongs to the universal ribosomal protein uL5 family. Part of the 50S ribosomal subunit; part of the 5S rRNA/L5/L18/L25 subcomplex. Contacts the 5S rRNA and the P site tRNA. Forms a bridge to the 30S subunit in the 70S ribosome.

Functionally, this is one of the proteins that bind and probably mediate the attachment of the 5S RNA into the large ribosomal subunit, where it forms part of the central protuberance. In the 70S ribosome it contacts protein S13 of the 30S subunit (bridge B1b), connecting the 2 subunits; this bridge is implicated in subunit movement. Contacts the P site tRNA; the 5S rRNA and some of its associated proteins might help stabilize positioning of ribosome-bound tRNAs. This Pseudomonas fluorescens (strain SBW25) protein is Large ribosomal subunit protein uL5.